The chain runs to 551 residues: C6 finger transcription factor imqK (551 aa).

The zn(2)-C6 fungal-type DNA-binding region spans 11 to 53; it reads CDRCRGQKLRCVRLPGPAREDSPRSARSVNQPCERCKRAKVVC. Disordered stretches follow at residues 280–302 and 351–378; these read RQGM…TSPS and NEYS…RISA. Over residues 351 to 369 the composition is skewed to low complexity; that stretch reads NEYSSSRSQSRNHSTSASS.

The protein resides in the nucleus. In terms of biological role, C6 finger transcription factor that positively regulates the cluster that mediates the biosynthesis of imizoquins A to D, tripeptide-derived alkaloids that serve a protective role against oxidative stress that are essential for normal germination. This chain is C6 finger transcription factor imqK, found in Aspergillus flavus (strain ATCC 200026 / FGSC A1120 / IAM 13836 / NRRL 3357 / JCM 12722 / SRRC 167).